Reading from the N-terminus, the 424-residue chain is Piriformospora indica-insensitive protein 2 (424 aa).

The N-terminal stretch at 1–21 is a signal peptide; the sequence is MLWQTFFSSLLLLSLLFGCNG. LRR repeat units lie at residues 141–166, 167–190, 191–213, 214–237, 238–263, 265–286, 287–311, 312–336, 337–360, and 362–387; these read ASNL…IGNL, TKLK…ICNL, KRLK…CFKG, LKEL…SFGD, LVSL…GFLK, LTLL…IENI, QSLT…NWGK, MSNL…LTNL, KRLR…KLEA, and PCLG…FYEK.

Its subcellular location is the cell membrane. In terms of biological role, required for growth promotion and enhanced seed production mediated by the endophytic fungus Piriformospora indica. The protein is Piriformospora indica-insensitive protein 2 (PII-2) of Arabidopsis thaliana (Mouse-ear cress).